The chain runs to 271 residues: 5-deoxy-glucuronate isomerase (271 aa).

The protein belongs to the isomerase IolB family.

The catalysed reaction is 5-deoxy-D-glucuronate = 5-dehydro-2-deoxy-D-gluconate. The protein operates within polyol metabolism; myo-inositol degradation into acetyl-CoA; acetyl-CoA from myo-inositol: step 4/7. Functionally, involved in the isomerization of 5-deoxy-glucuronate (5DG) to 5-dehydro-2-deoxy-D-gluconate (DKG or 2-deoxy-5-keto-D-gluconate). The polypeptide is 5-deoxy-glucuronate isomerase (Bacillus subtilis subsp. natto).